We begin with the raw amino-acid sequence, 442 residues long: Tubulin beta chain (442 aa).

Residues Gln11, Glu69, Ser138, Gly142, Thr143, Gly144, Asn204, and Asn226 each contribute to the GTP site. Residue Glu69 coordinates Mg(2+).

It belongs to the tubulin family. In terms of assembly, dimer of alpha and beta chains. A typical microtubule is a hollow water-filled tube with an outer diameter of 25 nm and an inner diameter of 15 nM. Alpha-beta heterodimers associate head-to-tail to form protofilaments running lengthwise along the microtubule wall with the beta-tubulin subunit facing the microtubule plus end conferring a structural polarity. Microtubules usually have 13 protofilaments but different protofilament numbers can be found in some organisms and specialized cells. It depends on Mg(2+) as a cofactor.

The protein resides in the cytoplasm. The protein localises to the cytoskeleton. Tubulin is the major constituent of microtubules, a cylinder consisting of laterally associated linear protofilaments composed of alpha- and beta-tubulin heterodimers. Microtubules grow by the addition of GTP-tubulin dimers to the microtubule end, where a stabilizing cap forms. Below the cap, tubulin dimers are in GDP-bound state, owing to GTPase activity of alpha-tubulin. The protein is Tubulin beta chain (TUB-B) of Pneumocystis carinii.